Here is a 462-residue protein sequence, read N- to C-terminus: Fumarate hydratase class II (462 aa).

Residues 97 to 99 (SGT), 127 to 130 (HPND), 137 to 139 (SSN), and threonine 185 contribute to the substrate site. The active-site Proton donor/acceptor is the histidine 186. Residue serine 316 is part of the active site. Residues serine 317 and 322-324 (KVN) each bind substrate.

It belongs to the class-II fumarase/aspartase family. Fumarase subfamily. In terms of assembly, homotetramer.

The protein localises to the cytoplasm. The enzyme catalyses (S)-malate = fumarate + H2O. It participates in carbohydrate metabolism; tricarboxylic acid cycle; (S)-malate from fumarate: step 1/1. Its function is as follows. Involved in the TCA cycle. Catalyzes the stereospecific interconversion of fumarate to L-malate. In Bacillus anthracis, this protein is Fumarate hydratase class II.